We begin with the raw amino-acid sequence, 454 residues long: Mediator of RNA polymerase II transcription subunit 1 (454 aa).

This sequence belongs to the Mediator complex subunit 1 family. As to quaternary structure, component of the Mediator complex.

It localises to the nucleus. In terms of biological role, component of the Mediator complex, a coactivator involved in the regulated transcription of nearly all RNA polymerase II-dependent genes. Mediator functions as a bridge to convey information from gene-specific regulatory proteins to the basal RNA polymerase II transcription machinery. Mediator is recruited to promoters by direct interactions with regulatory proteins and serves as a scaffold for the assembly of a functional preinitiation complex with RNA polymerase II and the general transcription factors. The chain is Mediator of RNA polymerase II transcription subunit 1 (med1) from Schizosaccharomyces pombe (strain 972 / ATCC 24843) (Fission yeast).